The chain runs to 354 residues: Uroporphyrinogen decarboxylase (354 aa).

Residues Arg25–Arg29, Asp75, Tyr152, Thr207, and His330 contribute to the substrate site.

It belongs to the uroporphyrinogen decarboxylase family. As to quaternary structure, homodimer.

Its subcellular location is the cytoplasm. The enzyme catalyses uroporphyrinogen III + 4 H(+) = coproporphyrinogen III + 4 CO2. It functions in the pathway porphyrin-containing compound metabolism; protoporphyrin-IX biosynthesis; coproporphyrinogen-III from 5-aminolevulinate: step 4/4. In terms of biological role, catalyzes the decarboxylation of four acetate groups of uroporphyrinogen-III to yield coproporphyrinogen-III. The chain is Uroporphyrinogen decarboxylase from Xanthomonas oryzae pv. oryzae (strain MAFF 311018).